Reading from the N-terminus, the 159-residue chain is MGFTEKQEGLVKESWEVLKQDIPHSSLRFFSLILEIAPGAKNMFSFLRESEEIPQNNPKLKAHAVKVFKMTCESAIQLREKGEVVVADTTLKYLGTVHVKSGVKDPHFEVVKEALLRTIEEAIGEEKWNEEMKNAWGEAYDQLAEAIKAEMKNHHDETA.

Residues 2–152 (GFTEKQEGLV…LAEAIKAEMK (151 aa)) form the Globin domain. A Homodimerization motif is present at residues 35-39 (EIAPG). Residues S45, K59, H63, and H98 each coordinate heme b. The Homodimerization motif lies at 105–117 (DPHFEVVKEALLR).

The protein belongs to the plant globin family. In terms of assembly, homodimer. Requires heme b as cofactor.

It is found in the cytoplasm. It localises to the nucleus. The catalysed reaction is Fe(III)-heme b-[protein] + nitric oxide + H2O = Fe(II)-heme b-[protein] + nitrite + 2 H(+). In terms of biological role, phytoglobin that reduces nitrite to nitric oxide (NO) under anoxic conditions (e.g. during flooding or in waterlogged soil). May not function as an oxygen storage or transport protein. Has an unusually high affinity for O(2) through an hexacoordinate heme iron because of a very low dissociation constant. The sequence is that of Anaerobic nitrite reductase HB2 from Gossypium hirsutum (Upland cotton).